The chain runs to 272 residues: D-aminoacyl-tRNA deacylase (272 aa).

This sequence belongs to the DtdA deacylase family. As to quaternary structure, monomer. Zn(2+) serves as cofactor.

It carries out the reaction a D-aminoacyl-tRNA + H2O = a tRNA + a D-alpha-amino acid + H(+). The catalysed reaction is glycyl-tRNA(Ala) + H2O = tRNA(Ala) + glycine + H(+). D-aminoacyl-tRNA deacylase with broad substrate specificity. By recycling D-aminoacyl-tRNA to D-amino acids and free tRNA molecules, this enzyme counteracts the toxicity associated with the formation of D-aminoacyl-tRNA entities in vivo. The polypeptide is D-aminoacyl-tRNA deacylase (Thermococcus kodakarensis (strain ATCC BAA-918 / JCM 12380 / KOD1) (Pyrococcus kodakaraensis (strain KOD1))).